The primary structure comprises 837 residues: Granulocyte colony-stimulating factor receptor (837 aa).

The N-terminal stretch at 1–25 (MVGLGACTLTGVTLIFLLLPRSLES) is a signal peptide. Cystine bridges form between Cys-26–Cys-52 and Cys-46–Cys-102. The Ig-like C2-type domain occupies 26–118 (CGHIEISPPV…SVQLLDQAEL (93 aa)). Over 26 to 626 (CGHIEISPPV…LTLRTLDPSD (601 aa)) the chain is Extracellular. N-linked (GlcNAc...) asparagine glycosylation is found at Asn-51, Asn-94, and Asn-129. Fibronectin type-III domains follow at residues 126–231 (SPSN…LEPP), 236–331 (LDIG…LRPT), 334–433 (APTI…NEGP), 434–529 (AVTG…GERA), and 530–624 (PPHA…TLDP). Intrachain disulfides connect Cys-132/Cys-143, Cys-168/Cys-219, Cys-178/Cys-187, Cys-249/Cys-296, and Cys-267/Cys-310. Residues Asn-186 and Asn-279 are each glycosylated (N-linked (GlcNAc...) asparagine). The WSXWS motif motif lies at 319-323 (WSPWS). N-linked (GlcNAc...) asparagine glycans are attached at residues Asn-392, Asn-408, Asn-474, Asn-487, Asn-582, and Asn-613. Residues 627–650 (LNIFLGILCLVLLSTTCVVTWLCC) form a helical membrane-spanning segment. Topologically, residues 651 to 837 (KRRGKTSFWS…VHGVEEQGGF (187 aa)) are cytoplasmic. A Box 1 motif motif is present at residues 658-666 (FWSDVPDPA).

The protein belongs to the type I cytokine receptor family. Type 2 subfamily. As to quaternary structure, homodimer. The dimeric receptor binds two CSF3 molecules. Interacts with CEACAM1; down-regulates the CSF3R-STAT3 pathway through recruitment of PTPN6 that dephosphorylates CSF3R. In terms of processing, N-glycosylated. In terms of tissue distribution, found in bone marrow.

It localises to the membrane. Functionally, receptor for granulocyte colony-stimulating factor (CSF3). In addition it may function in some adhesion or recognition events at the cell surface. The polypeptide is Granulocyte colony-stimulating factor receptor (Csf3r) (Mus musculus (Mouse)).